Here is a 330-residue protein sequence, read N- to C-terminus: Putative protein DDB_G0285185 (330 aa).

Residues 212 to 240 (NKLQNQVQSSPKLSSPITKNKEQIVSTTS) form a disordered region. The span at 214–240 (LQNQVQSSPKLSSPITKNKEQIVSTTS) shows a compositional bias: polar residues.

In Dictyostelium discoideum (Social amoeba), this protein is Putative protein DDB_G0285185.